We begin with the raw amino-acid sequence, 144 residues long: Large ribosomal subunit protein eL27 (144 aa).

The protein belongs to the eukaryotic ribosomal protein eL27 family.

It is found in the cytoplasm. This chain is Large ribosomal subunit protein eL27 (RPL27), found in Tetrahymena thermophila.